Consider the following 196-residue polypeptide: MEKFIKHTGVGVPLQRSNVDTDQIIPAVYLKRVTRTGFEDGLFSNWRKNDPDFVLNQDTYKNGSVLIAGPDFGTGSSREHAVWALMDYGFRAVFSSRFADIFRGNSGKAGLLTGIMEQSDIELLWKLMEQTPGLEMTVDLENQTVVAGDTVISFEVDPYIRWRLMEGLDDVGLTLRKVDEIEAYEAKRPAFKPSAL.

It belongs to the LeuD family. LeuD type 1 subfamily. As to quaternary structure, heterodimer of LeuC and LeuD.

The enzyme catalyses (2R,3S)-3-isopropylmalate = (2S)-2-isopropylmalate. It functions in the pathway amino-acid biosynthesis; L-leucine biosynthesis; L-leucine from 3-methyl-2-oxobutanoate: step 2/4. Catalyzes the isomerization between 2-isopropylmalate and 3-isopropylmalate, via the formation of 2-isopropylmaleate. This Corynebacterium efficiens (strain DSM 44549 / YS-314 / AJ 12310 / JCM 11189 / NBRC 100395) protein is 3-isopropylmalate dehydratase small subunit.